Consider the following 397-residue polypeptide: DnaJ homolog subfamily A member 4 (397 aa).

The 67-residue stretch at 4–70 (ETQYYDILGV…RDIYDQGGEQ (67 aa)) folds into the J domain. At Ser18 the chain carries Phosphoserine. The segment at 122–206 (GITKKLALQK…CSGAKVTREK (85 aa)) adopts a CR-type zinc-finger fold. Cys135, Cys138, Cys151, Cys154, Cys178, Cys181, Cys194, and Cys197 together coordinate Zn(2+). CXXCXGXG motif repeat units follow at residues 135 to 142 (CEKCEGIG), 151 to 158 (CPLCKGRG), 178 to 185 (CIECKGQG), and 194 to 201 (CENCSGAK). Basic and acidic residues predominate over residues 366-380 (EFNPNEQSWRQHREA). The tract at residues 366–397 (EFNPNEQSWRQHREAYEEDDEEPRAGVQCQTA) is disordered. Cys394 bears the Cysteine methyl ester mark. A lipid anchor (S-farnesyl cysteine) is attached at Cys394. A propeptide spans 395 to 397 (QTA) (removed in mature form).

Specifically expressed in testis and heart.

The protein localises to the membrane. This is DnaJ homolog subfamily A member 4 (Dnaja4) from Mus musculus (Mouse).